Consider the following 244-residue polypeptide: Large ribosomal subunit protein uL30 (244 aa).

This sequence belongs to the universal ribosomal protein uL30 family.

This is Large ribosomal subunit protein uL30 (RPL7) from Candida glabrata (strain ATCC 2001 / BCRC 20586 / JCM 3761 / NBRC 0622 / NRRL Y-65 / CBS 138) (Yeast).